The following is a 672-amino-acid chain: Acetyl-coenzyme A synthetase (672 aa).

CoA-binding positions include 217–220 (RRGK) and Thr335. Residues 411–413 (GEP), 435–440 (DTWWQT), Asp529, Arg544, and Arg555 contribute to the ATP site. Val566, His568, and Ile571 together coordinate Mg(2+). Arg613 provides a ligand contact to CoA. Lys638 is subject to N6-acetyllysine.

It belongs to the ATP-dependent AMP-binding enzyme family. The cofactor is Mg(2+). Post-translationally, acetylated. Deacetylation by the SIR2-homolog deacetylase activates the enzyme. The N-terminus is blocked.

It carries out the reaction acetate + ATP + CoA = acetyl-CoA + AMP + diphosphate. Its function is as follows. Catalyzes the conversion of acetate into acetyl-CoA (AcCoA), an essential intermediate at the junction of anabolic and catabolic pathways. AcsA undergoes a two-step reaction. In the first half reaction, AcsA combines acetate with ATP to form acetyl-adenylate (AcAMP) intermediate. In the second half reaction, it can then transfer the acetyl group from AcAMP to the sulfhydryl group of CoA, forming the product AcCoA. The sequence is that of Acetyl-coenzyme A synthetase from Methanothrix soehngenii (Methanosaeta concilii).